The primary structure comprises 363 residues: NAD(P)H-quinone oxidoreductase subunit 1, chloroplastic (363 aa).

Helical transmembrane passes span 27–47, 93–113, 124–144, 162–182, 200–220, 250–270, 303–323, and 343–363; these read LIPILIILLGATLGVLVIVWL, WLFSVGPALVVVPVFLSYLVV, LGVGILFWIALSSIAPLGLLM, AAQAISYEIPLALCVLSVALL, ILGWNIWRQPIGFIAFLIASL, FGLFYVGSYLNLLVSALFVSV, ATLGIAITLGKAYLFLFLSIL, and FLLPVSLGNLLLTASLQLALL.

Belongs to the complex I subunit 1 family. NDH is composed of at least 16 different subunits, 5 of which are encoded in the nucleus.

It localises to the plastid. Its subcellular location is the chloroplast thylakoid membrane. It carries out the reaction a plastoquinone + NADH + (n+1) H(+)(in) = a plastoquinol + NAD(+) + n H(+)(out). The catalysed reaction is a plastoquinone + NADPH + (n+1) H(+)(in) = a plastoquinol + NADP(+) + n H(+)(out). In terms of biological role, NDH shuttles electrons from NAD(P)H:plastoquinone, via FMN and iron-sulfur (Fe-S) centers, to quinones in the photosynthetic chain and possibly in a chloroplast respiratory chain. The immediate electron acceptor for the enzyme in this species is believed to be plastoquinone. Couples the redox reaction to proton translocation, and thus conserves the redox energy in a proton gradient. In Chaetosphaeridium globosum (Charophycean green alga), this protein is NAD(P)H-quinone oxidoreductase subunit 1, chloroplastic.